The primary structure comprises 943 residues: MTGSWNPTSIIIPVTLSFLLSFIHNFADVVAAPTRHLCLPEQRDALLELKNEFEIGKPSSNDYCYRNNSRVSPHPTTESWRNNSDCCNWEGITCDTKSGEVIELDLSCSWLYGSFHSNSSLFRLQNLRVLDLTQNDLDGEIPSSIGNLSHLTSLHLSYNQFLGLIPSSIENLSRLTSLHLSSNQFSGQIPSSIGNLSHLTSLELSSNQFSGQIPSSIGNLSNLTFLSLPSNDFFGQIPSSIGNLARLTYLYLSYNNFVGEIPSSFGNLNQLIVLQVDSNKLSGNVPISLLNLTRLSALLLSHNQFTGTIPNNISLLSNLMDFEASNNAFTGTLPSSLFNIPPLIRLDLSDNQLNGTLHFGNISSPSNLQYLIIGSNNFIGTIPRSLSRFVNLTLFDLSHLNTQCRPVDFSIFSHLKSLDDLRLSYLTTTTIDLNDILPYFKTLRSLDISGNLVSATNKSSVSSDPPSQSIQSLYLSGCGITDFPEILRTQHELGFLDVSNNKIKGQVPGWLWTLPNLFYLNLSNNTFISFESSSKKHGLSSVRKPSMIHLFASNNNFTGKIPSFICGLRSLNTLDLSENNYNGSIPRCMEKLKSTLFVLNLRQNNLSGGLPKHIFESLRSLDVGHNLLVGKLPRSLIRFSNLEVLNVESNRINDTFPFWLSSLSKLQVLVLRSNAFHGPIHEATFPELRIIDISHNHFNGTLPTEYFVKWSAMSSLGKNEDQSNEKYMGSGLYYQDSMVLMNKGLAMELVRILTIYTALDFSGNKFEGEIPKSIGLLKELLVLNLSNNAFGGHIPSSMGNLTALESLDVSQNKLTGEIPQELGDLSFLAYMNFSHNQLAGLVPGGTQFRRQNCSAFENNLGLFGPSLDEVCRDKHTPASQQNETTETEEEDEEEISWIAAAIGFIPGIVFGLTIGYILVSYKPEWFMNPFGRNNRRRRNTTTH.

The N-terminal stretch at 1-31 (MTGSWNPTSIIIPVTLSFLLSFIHNFADVVA) is a signal peptide. Topologically, residues 32 to 897 (APTRHLCLPE…EEEDEEEISW (866 aa)) are extracellular. N-linked (GlcNAc...) asparagine glycosylation is found at Asn67, Asn82, Asn118, Asn147, Asn171, Asn195, Asn219, and Asn222. 11 LRR repeats span residues 124-148 (LQNLRVLDLTQNDLDGEIPSSIGNL), 150-171 (HLTSLHLSYNQFLGLIPSSIEN), 172-196 (LSRLTSLHLSSNQFSGQIPSSIGNL), 198-220 (HLTSLELSSNQFSGQIPSSIGNL), 222-244 (NLTFLSLPSNDFFGQIPSSIGNL), 245-267 (ARLTYLYLSYNNFVGEIPSSFGN), 268-292 (LNQLIVLQVDSNKLSGNVPISLLNL), 293-317 (TRLSALLLSHNQFTGTIPNNISLLS), 319-340 (LMDFEASNNAFTGTLPSSLFNI), 341-364 (PPLIRLDLSDNQLNGTLHFGNISS), and 366-389 (SNLQYLIIGSNNFIGTIPRSLSRF). N-linked (GlcNAc...) asparagine glycosylation is found at Asn291 and Asn312. 2 N-linked (GlcNAc...) asparagine glycosylation sites follow: Asn354 and Asn361. Residues 390-414 (VNLTLFDLSHLNTQCRPVDFSIFSH) form an LRR 12; degenerate repeat. The N-linked (GlcNAc...) asparagine glycan is linked to Asn391. 16 LRR repeats span residues 415–439 (LKSLDDLRLSYLTTTTIDLNDILPY), 440–463 (FKTLRSLDISGNLVSATNKSSVSS), 467–490 (SQSIQSLYLSGCGITDFPEILRTQ), 491–514 (HELGFLDVSNNKIKGQVPGWLWTL), 515–537 (PNLFYLNLSNNTFISFESSSKKH), 544–568 (KPSMIHLFASNNNFTGKIPSFICGL), 569–592 (RSLNTLDLSENNYNGSIPRCMEKL), 593–617 (KSTLFVLNLRQNNLSGGLPKHIFES), 619–639 (RSLDVGHNLLVGKLPRSLIRF), 640–665 (SNLEVLNVESNRINDTFPFWLSSLSK), 667–685 (QVLVLRSNAFHGPIHEATF), 686–709 (PELRIIDISHNHFNGTLPTEYFVK), 753–777 (LTIYTALDFSGNKFEGEIPKSIGLL), 778–801 (KELLVLNLSNNAFGGHIPSSMGNL), 802–825 (TALESLDVSQNKLTGEIPQELGDL), and 827–850 (FLAYMNFSHNQLAGLVPGGTQFRR). Residue Asn457 is glycosylated (N-linked (GlcNAc...) asparagine). Asn521, Asn524, Asn556, Asn582, and Asn605 each carry an N-linked (GlcNAc...) asparagine glycan. Residue Asn653 is glycosylated (N-linked (GlcNAc...) asparagine). N-linked (GlcNAc...) asparagine glycosylation is present at Asn699. N-linked (GlcNAc...) asparagine glycosylation is found at Asn784 and Asn800. N-linked (GlcNAc...) asparagine glycans are attached at residues Asn832, Asn852, and Asn882. Residues 898-918 (IAAAIGFIPGIVFGLTIGYIL) traverse the membrane as a helical segment. Topologically, residues 919 to 943 (VSYKPEWFMNPFGRNNRRRRNTTTH) are cytoplasmic.

It belongs to the RLP family.

It is found in the cell membrane. This is Receptor-like protein 35 from Arabidopsis thaliana (Mouse-ear cress).